A 112-amino-acid polypeptide reads, in one-letter code: UPF0342 protein SGO_1370 (112 aa).

The protein belongs to the UPF0342 family.

This Streptococcus gordonii (strain Challis / ATCC 35105 / BCRC 15272 / CH1 / DL1 / V288) protein is UPF0342 protein SGO_1370.